We begin with the raw amino-acid sequence, 386 residues long: Terpene cyclase 6 (386 aa).

Asp-128, Asn-276, and Ser-280 together coordinate Mg(2+). The D(D/E)XX(D/E) motif signature appears at Asp-128–Asp-132. Positions Asn-276 to Glu-284 match the NSE motif motif. The WxxxxxRY motif motif lies at Trp-360 to Tyr-367. (2E,6E)-farnesyl diphosphate-binding residues include Arg-366 and Tyr-367.

The protein belongs to the terpene synthase family. As to quaternary structure, homodimer. It depends on Mg(2+) as a cofactor.

The catalysed reaction is (2E,6E)-farnesyl diphosphate + H2O = trichobrasilenol + diphosphate. It carries out the reaction (2E,6E)-farnesyl diphosphate = alpha-humulene + diphosphate. It catalyses the reaction (2E,6E)-farnesyl diphosphate = (-)-(E)-beta-caryophyllene + diphosphate. The enzyme catalyses (2E,6E)-farnesyl diphosphate = (E)-2-epi-beta-caryophyllene + diphosphate. The catalysed reaction is (2E,6E)-farnesyl diphosphate + H2O = (+)-isoafricanol + diphosphate. It carries out the reaction (2E,6E)-farnesyl diphosphate + H2O = (+)-(2S,3R,9R)-pristinol + diphosphate. It catalyses the reaction (2E,6E)-farnesyl diphosphate = african-3-ene + diphosphate. The enzyme catalyses (2E,6E)-farnesyl diphosphate = african-1-ene + diphosphate. The protein operates within sesquiterpene biosynthesis. Terpene cyclase that is able to convert FPP into a mixture of sesquiterpene hydrocarbons and alcohols. The main product is trichobrasilenol. Additionally, side products include alpha-humulene, caryophyllene, 2-epi-caryophyllene, african-3-ene, african-1-ene, isoafricanol and pristinol. Does not accept GPP, GGPP, and GFPP as substrates. This chain is Terpene cyclase 6, found in Hypocrea atroviridis (Trichoderma atroviride).